Reading from the N-terminus, the 373-residue chain is GTPase Obg (373 aa).

Residues 1–159 (MKFIDEARIE…RMVRLELKVL (159 aa)) enclose the Obg domain. The disordered stretch occupies residues 128–147 (LHFKSSTNRAPRQKTDGKPG). Residues 160–334 (ADVGLLGMPN…LCYAVFDHIS (175 aa)) enclose the OBG-type G domain. GTP contacts are provided by residues 166–173 (GMPNAGKS), 191–195 (FTTLA), 213–216 (DIPG), 284–287 (NKLD), and 315–317 (SAL). Positions 173 and 193 each coordinate Mg(2+). A disordered region spans residues 354-373 (FREKPQAPAAADDAGTDPQV). A compositionally biased stretch (low complexity) spans 359–373 (QAPAAADDAGTDPQV).

Belongs to the TRAFAC class OBG-HflX-like GTPase superfamily. OBG GTPase family. Monomer. Mg(2+) is required as a cofactor.

It localises to the cytoplasm. An essential GTPase which binds GTP, GDP and possibly (p)ppGpp with moderate affinity, with high nucleotide exchange rates and a fairly low GTP hydrolysis rate. Plays a role in control of the cell cycle, stress response, ribosome biogenesis and in those bacteria that undergo differentiation, in morphogenesis control. This Paraburkholderia phytofirmans (strain DSM 17436 / LMG 22146 / PsJN) (Burkholderia phytofirmans) protein is GTPase Obg.